The sequence spans 513 residues: Flagellin A (513 aa).

This sequence belongs to the bacterial flagellin family. In terms of assembly, heteromer of FlaA and FlaB. FlaB is located proximal to the hook while the remainder of the filament is composed of the predominant FlaA.

Its subcellular location is the secreted. It localises to the bacterial flagellum. Functionally, flagellin is the subunit protein which polymerizes to form the filaments of bacterial flagella. Important for motility and virulence. This is Flagellin A (flaA) from Helicobacter felis (strain ATCC 49179 / CCUG 28539 / NCTC 12436 / CS1).